Reading from the N-terminus, the 366-residue chain is 2-oxoglutarate synthase subunit KorA (366 aa).

In terms of assembly, heterotetramer of the KorA, KorB, KorC and KorD subunits.

It carries out the reaction 2 oxidized [2Fe-2S]-[ferredoxin] + 2-oxoglutarate + CoA = succinyl-CoA + 2 reduced [2Fe-2S]-[ferredoxin] + CO2 + H(+). The polypeptide is 2-oxoglutarate synthase subunit KorA (korA) (Methanocaldococcus jannaschii (strain ATCC 43067 / DSM 2661 / JAL-1 / JCM 10045 / NBRC 100440) (Methanococcus jannaschii)).